The following is a 476-amino-acid chain: Bifunctional protein HldE (476 aa).

The ribokinase stretch occupies residues 1-318 (MKVTLPEFER…ENAVRGRADT (318 aa)). 195-198 (NLSE) is an ATP binding site. Asp264 is a catalytic residue. A cytidylyltransferase region spans residues 344-476 (MTNGVFDILH…IIKKIQKDSQ (133 aa)).

This sequence in the N-terminal section; belongs to the carbohydrate kinase PfkB family. In the C-terminal section; belongs to the cytidylyltransferase family. As to quaternary structure, homodimer.

The enzyme catalyses D-glycero-beta-D-manno-heptose 7-phosphate + ATP = D-glycero-beta-D-manno-heptose 1,7-bisphosphate + ADP + H(+). It catalyses the reaction D-glycero-beta-D-manno-heptose 1-phosphate + ATP + H(+) = ADP-D-glycero-beta-D-manno-heptose + diphosphate. It participates in nucleotide-sugar biosynthesis; ADP-L-glycero-beta-D-manno-heptose biosynthesis; ADP-L-glycero-beta-D-manno-heptose from D-glycero-beta-D-manno-heptose 7-phosphate: step 1/4. The protein operates within nucleotide-sugar biosynthesis; ADP-L-glycero-beta-D-manno-heptose biosynthesis; ADP-L-glycero-beta-D-manno-heptose from D-glycero-beta-D-manno-heptose 7-phosphate: step 3/4. Catalyzes the phosphorylation of D-glycero-D-manno-heptose 7-phosphate at the C-1 position to selectively form D-glycero-beta-D-manno-heptose-1,7-bisphosphate. Functionally, catalyzes the ADP transfer from ATP to D-glycero-beta-D-manno-heptose 1-phosphate, yielding ADP-D-glycero-beta-D-manno-heptose. The protein is Bifunctional protein HldE of Enterobacter sp. (strain 638).